A 184-amino-acid chain; its full sequence is MSVMPDTWIREMAKTKGMIEPFTEKQQRAGVISYGVSSYGYDARVSREFKIFTNVDSAVVDPKSFSPNSLVDRETDICVIPPNSFALARTVEYFRIPRDVLVICLGKSTYARCGIIVNVTPLEPEWEGHVTLEFSNTTPLPAKIYAGEGACQFIFLKGDTVCETSYADRSGKYQGQQGVTLPRL.

DCTP contacts are provided by residues 107 to 112 (KSTYAR), 131 to 133 (TLE), glutamine 152, tyrosine 166, and glutamine 176. Residue glutamate 133 is the Proton donor/acceptor of the active site.

It belongs to the dCTP deaminase family. Homotrimer.

The enzyme catalyses dCTP + H2O + H(+) = dUTP + NH4(+). Its pathway is pyrimidine metabolism; dUMP biosynthesis; dUMP from dCTP (dUTP route): step 1/2. Its function is as follows. Catalyzes the deamination of dCTP to dUTP. This is dCTP deaminase from Paramagnetospirillum magneticum (strain ATCC 700264 / AMB-1) (Magnetospirillum magneticum).